Consider the following 392-residue polypeptide: MAVSADYQVKFPESGDLYSILAAEGIEFLLSHSGEVPLEYIHGKTICLFFSAIWCRPCKDFTPELIKLYENLQNRGEELEIIFVSFDHDMTSFYEHFWCMPWLAVPFNLSLLNKLRDKYGISRIPSLVPLYSDEISVAEDVIGLIEDYGSEAFPFTKKRKEELKAIDDSKRLGGQLEKLLTHESRNYVVARNGSKVLVSKLVGKTIGLYFGAHWCPPFRSFTSQLVDVYNELATTDKGSFEVILISTDRDSREFNINMTNMPWLAIPYEDRTRQDLCRIFNVKLIPALVIIGPEEKTVTTNAREMVSLYGSRSFPFTESRIVELKACLKKEGDSLPRKVKDNKHEHELKLDMAKAYVCDFCKKQGRFWAFSCNACDYDLHPTCVEEEEALLV.

Thioredoxin domains are found at residues 17–171 and 177–326; these read LYSI…DSKR and EKLL…ELKA.

Belongs to the nucleoredoxin family.

The catalysed reaction is [protein]-dithiol + NAD(+) = [protein]-disulfide + NADH + H(+). It carries out the reaction [protein]-dithiol + NADP(+) = [protein]-disulfide + NADPH + H(+). In terms of biological role, probable thiol-disulfide oxidoreductase that may participate in various redox reactions. This Arabidopsis thaliana (Mouse-ear cress) protein is Probable nucleoredoxin 3.